The following is a 236-amino-acid chain: Urease accessory protein UreF (236 aa).

This sequence belongs to the UreF family. As to quaternary structure, ureD, UreF and UreG form a complex that acts as a GTP-hydrolysis-dependent molecular chaperone, activating the urease apoprotein by helping to assemble the nickel containing metallocenter of UreC. The UreE protein probably delivers the nickel.

The protein resides in the cytoplasm. Functionally, required for maturation of urease via the functional incorporation of the urease nickel metallocenter. The polypeptide is Urease accessory protein UreF (Granulibacter bethesdensis (strain ATCC BAA-1260 / CGDNIH1)).